The following is a 219-amino-acid chain: Ion-translocating oxidoreductase complex subunit G (219 aa).

The chain crosses the membrane as a helical span at residues 25–45 (GLLLGLFSLVSALMLALASDA). Threonine 187 is subject to FMN phosphoryl threonine.

This sequence belongs to the RnfG family. As to quaternary structure, the complex is composed of six subunits: RnfA, RnfB, RnfC, RnfD, RnfE and RnfG. The cofactor is FMN.

The protein localises to the cellular chromatophore membrane. Its function is as follows. Part of a membrane-bound complex that couples electron transfer with translocation of ions across the membrane. This Cereibacter sphaeroides (strain ATCC 17023 / DSM 158 / JCM 6121 / CCUG 31486 / LMG 2827 / NBRC 12203 / NCIMB 8253 / ATH 2.4.1.) (Rhodobacter sphaeroides) protein is Ion-translocating oxidoreductase complex subunit G.